The primary structure comprises 135 residues: Transcriptional activator protein (135 aa).

The Nuclear localization signal motif lies at 17 to 32 (KIQHHIAKKRQVRRRR). Residues 37 to 54 (CGCSYYIHLDCINHGFTH) fold into a zinc finger. The tract at residues 120–135 (HLDDLTVSDWSFFKSL) is transactivation.

The protein belongs to the geminiviridae transcriptional activator protein family. As to quaternary structure, monomer. Homodimer. Homooligomer. Self-interaction correlates with nuclear localization and efficient activation of transcription. Monomers suppress local silencing by interacting with and inactivating host adenosine kinase 2 (ADK2) in the cytoplasm. Interacts with and inhibits host SNF1 kinase. Binds to ssDNA. May interact with host RPS27A. Post-translationally, phosphorylated.

It is found in the host nucleus. The protein localises to the host cytoplasm. Multifunctional protein that modulates host antiviral defenses and promotes host attractiveness to insect vectors. Acts as a suppressor of RNA-mediated gene silencing, also known as post-transcriptional gene silencing (PTGS), a mechanism of plant viral defense that limits the accumulation of viral RNAs. TrAP suppresses the host RNA silencing by inhibiting adenosine kinase 2 (ADK2), a kinase involved in a general methylation pathway. Also suppresses the host basal defense by interacting with and inhibiting SNF1 kinase, a key regulator of cell metabolism implicated in innate antiviral defense. Functionally, inhibits signal transduction by the phytohormone jasmonate, making the infected plant more attractive to aphids, which are the second host to play a role as a dissemination vector. Acts by binding to ubiquitin precursor RPS27A, thereby preventing ubiquitin degradation of JAZ. This chain is Transcriptional activator protein, found in Capsicum annuum (Capsicum pepper).